A 39-amino-acid chain; its full sequence is Photosystem II reaction center protein J (39 aa).

The chain crosses the membrane as a helical span at residues 9–29 (LWIIATFGGIAALTVVGLFIY).

The protein belongs to the PsbJ family. PSII is composed of 1 copy each of membrane proteins PsbA, PsbB, PsbC, PsbD, PsbE, PsbF, PsbH, PsbI, PsbJ, PsbK, PsbL, PsbM, PsbT, PsbX, PsbY, PsbZ, Psb30/Ycf12, at least 3 peripheral proteins of the oxygen-evolving complex and a large number of cofactors. It forms dimeric complexes.

Its subcellular location is the plastid. The protein resides in the chloroplast thylakoid membrane. Its function is as follows. One of the components of the core complex of photosystem II (PSII). PSII is a light-driven water:plastoquinone oxidoreductase that uses light energy to abstract electrons from H(2)O, generating O(2) and a proton gradient subsequently used for ATP formation. It consists of a core antenna complex that captures photons, and an electron transfer chain that converts photonic excitation into a charge separation. The sequence is that of Photosystem II reaction center protein J from Guillardia theta (Cryptophyte).